A 434-amino-acid chain; its full sequence is UDP-N-acetylglucosamine 1-carboxyvinyltransferase 1 (434 aa).

Lys-22–Asn-23 serves as a coordination point for phosphoenolpyruvate. UDP-N-acetyl-alpha-D-glucosamine is bound at residue Arg-93. Cys-117 (proton donor) is an active-site residue. Residue Cys-117 is modified to 2-(S-cysteinyl)pyruvic acid O-phosphothioketal. UDP-N-acetyl-alpha-D-glucosamine-binding positions include Arg-122–Gln-126, Asp-306, and Val-328.

It belongs to the EPSP synthase family. MurA subfamily.

It is found in the cytoplasm. It catalyses the reaction phosphoenolpyruvate + UDP-N-acetyl-alpha-D-glucosamine = UDP-N-acetyl-3-O-(1-carboxyvinyl)-alpha-D-glucosamine + phosphate. It functions in the pathway cell wall biogenesis; peptidoglycan biosynthesis. Functionally, cell wall formation. Adds enolpyruvyl to UDP-N-acetylglucosamine. In Bacillus cereus (strain ATCC 10987 / NRS 248), this protein is UDP-N-acetylglucosamine 1-carboxyvinyltransferase 1.